A 441-amino-acid chain; its full sequence is Serine hydroxymethyltransferase (441 aa).

124–126 (GHI) contacts (6S)-5,6,7,8-tetrahydrofolate. Residue Lys-239 is modified to N6-(pyridoxal phosphate)lysine.

It belongs to the SHMT family. In terms of assembly, homodimer. Pyridoxal 5'-phosphate is required as a cofactor.

It is found in the cytoplasm. It functions in the pathway amino-acid biosynthesis; glycine biosynthesis; glycine from L-serine: step 1/1. Catalyzes the reversible interconversion of serine and glycine with a modified folate serving as the one-carbon carrier. Also exhibits a pteridine-independent aldolase activity toward beta-hydroxyamino acids, producing glycine and aldehydes, via a retro-aldol mechanism. In Cenarchaeum symbiosum (strain A), this protein is Serine hydroxymethyltransferase.